Reading from the N-terminus, the 250-residue chain is uncharacterized protein (250 aa).

An N-terminal signal peptide occupies residues 1–19 (MAKPRNAAESKAAKAQANA). 2 consecutive transmembrane segments (helical) span residues 51 to 71 (IGAF…AGGF) and 73 to 93 (MFTM…VIFG). Positions 226 to 250 (AGVMPKGPLPTTAKMRSVQRTVRRK) are disordered.

The protein resides in the cell membrane. This is an uncharacterized protein from Mycobacterium tuberculosis (strain CDC 1551 / Oshkosh).